We begin with the raw amino-acid sequence, 1829 residues long: DNA polymerase (1829 aa).

DOD-type homing endonuclease domains follow at residues 527–668 (LSGI…SLGI) and 1136–1269 (FLGY…SLGV).

This sequence belongs to the DNA polymerase type-B family. In terms of processing, this protein undergoes a protein self splicing that involves a post-translational excision of the three intervening regions (inteins) followed by peptide ligation.

It carries out the reaction DNA(n) + a 2'-deoxyribonucleoside 5'-triphosphate = DNA(n+1) + diphosphate. The chain is DNA polymerase (pol) from Thermococcus aggregans.